Here is a 374-residue protein sequence, read N- to C-terminus: PqqA peptide cyclase (374 aa).

Residues 13 to 230 (VPAPIAMLAE…EAEARLRGTL (218 aa)) form the Radical SAM core domain. The [4Fe-4S] cluster site is built by Cys-27, Cys-31, and Cys-34.

The protein belongs to the radical SAM superfamily. PqqE family. In terms of assembly, interacts with PqqD. The interaction is necessary for activity of PqqE. The cofactor is [4Fe-4S] cluster.

It catalyses the reaction [PQQ precursor protein] + S-adenosyl-L-methionine = E-Y cross-linked-[PQQ precursor protein] + 5'-deoxyadenosine + L-methionine + H(+). It functions in the pathway cofactor biosynthesis; pyrroloquinoline quinone biosynthesis. In terms of biological role, catalyzes the cross-linking of a glutamate residue and a tyrosine residue in the PqqA protein as part of the biosynthesis of pyrroloquinoline quinone (PQQ). The chain is PqqA peptide cyclase from Ruegeria pomeroyi (strain ATCC 700808 / DSM 15171 / DSS-3) (Silicibacter pomeroyi).